A 529-amino-acid chain; its full sequence is Bifunctional purine biosynthesis protein PurH (529 aa).

An MGS-like domain is found at 1 to 148 (MNNARPIRRA…KNHKDTTIIV (148 aa)).

Belongs to the PurH family.

The enzyme catalyses (6R)-10-formyltetrahydrofolate + 5-amino-1-(5-phospho-beta-D-ribosyl)imidazole-4-carboxamide = 5-formamido-1-(5-phospho-D-ribosyl)imidazole-4-carboxamide + (6S)-5,6,7,8-tetrahydrofolate. It catalyses the reaction IMP + H2O = 5-formamido-1-(5-phospho-D-ribosyl)imidazole-4-carboxamide. It functions in the pathway purine metabolism; IMP biosynthesis via de novo pathway; 5-formamido-1-(5-phospho-D-ribosyl)imidazole-4-carboxamide from 5-amino-1-(5-phospho-D-ribosyl)imidazole-4-carboxamide (10-formyl THF route): step 1/1. Its pathway is purine metabolism; IMP biosynthesis via de novo pathway; IMP from 5-formamido-1-(5-phospho-D-ribosyl)imidazole-4-carboxamide: step 1/1. This Shewanella pealeana (strain ATCC 700345 / ANG-SQ1) protein is Bifunctional purine biosynthesis protein PurH.